The following is a 484-amino-acid chain: Probable glycine dehydrogenase (decarboxylating) subunit 2 (484 aa).

At Lys-264 the chain carries N6-(pyridoxal phosphate)lysine.

This sequence belongs to the GcvP family. C-terminal subunit subfamily. The glycine cleavage system is composed of four proteins: P, T, L and H. In this organism, the P 'protein' is a heterodimer of two subunits. Requires pyridoxal 5'-phosphate as cofactor.

It carries out the reaction N(6)-[(R)-lipoyl]-L-lysyl-[glycine-cleavage complex H protein] + glycine + H(+) = N(6)-[(R)-S(8)-aminomethyldihydrolipoyl]-L-lysyl-[glycine-cleavage complex H protein] + CO2. Functionally, the glycine cleavage system catalyzes the degradation of glycine. The P protein binds the alpha-amino group of glycine through its pyridoxal phosphate cofactor; CO(2) is released and the remaining methylamine moiety is then transferred to the lipoamide cofactor of the H protein. The polypeptide is Probable glycine dehydrogenase (decarboxylating) subunit 2 (Legionella pneumophila (strain Lens)).